The primary structure comprises 415 residues: Serine hydroxymethyltransferase 2 (415 aa).

(6S)-5,6,7,8-tetrahydrofolate contacts are provided by residues Leu-122 and 126 to 128; that span reads GHL. N6-(pyridoxal phosphate)lysine is present on Lys-230.

This sequence belongs to the SHMT family. In terms of assembly, homodimer. Pyridoxal 5'-phosphate serves as cofactor.

It localises to the cytoplasm. It catalyses the reaction (6R)-5,10-methylene-5,6,7,8-tetrahydrofolate + glycine + H2O = (6S)-5,6,7,8-tetrahydrofolate + L-serine. Its pathway is one-carbon metabolism; tetrahydrofolate interconversion. It participates in amino-acid biosynthesis; glycine biosynthesis; glycine from L-serine: step 1/1. Catalyzes the reversible interconversion of serine and glycine with tetrahydrofolate (THF) serving as the one-carbon carrier. This reaction serves as the major source of one-carbon groups required for the biosynthesis of purines, thymidylate, methionine, and other important biomolecules. Also exhibits THF-independent aldolase activity toward beta-hydroxyamino acids, producing glycine and aldehydes, via a retro-aldol mechanism. This chain is Serine hydroxymethyltransferase 2, found in Burkholderia lata (strain ATCC 17760 / DSM 23089 / LMG 22485 / NCIMB 9086 / R18194 / 383).